The following is a 112-amino-acid chain: Ig kappa chain V-II region MOPC 167 (112 aa).

The framework-1 stretch occupies residues 1–23; the sequence is DIVITQDELSNPVTSGESVSISC. Cys-23 and Cys-93 are oxidised to a cystine. Positions 24–39 are complementarity-determining-1; that stretch reads RSSKSLLYKDGKTYLN. The segment at 40 to 54 is framework-2; sequence WFLQRPGQSPQLLIS. The segment at 55 to 61 is complementarity-determining-2; sequence LMSTRAS. Residues 62-93 form a framework-3 region; that stretch reads GVSDRFSGSGSRTDFTLEISRVKAEDVGVYYC. The interval 94 to 102 is complementarity-determining-3; that stretch reads QQLVEYPLT. Residues 103–112 form a framework-4 region; that stretch reads FGAGTKLELK.

In Mus musculus (Mouse), this protein is Ig kappa chain V-II region MOPC 167.